We begin with the raw amino-acid sequence, 154 residues long: Methylglyoxal synthase (154 aa).

The MGS-like domain occupies 6-154 (SPLPANKAIA…AYMARRAQGN (149 aa)). Substrate-binding positions include histidine 19, lysine 23, 45–48 (TGTT), and 65–66 (SG). The active-site Proton donor/acceptor is aspartate 71. Histidine 98 provides a ligand contact to substrate.

This sequence belongs to the methylglyoxal synthase family.

It carries out the reaction dihydroxyacetone phosphate = methylglyoxal + phosphate. Catalyzes the formation of methylglyoxal from dihydroxyacetone phosphate. This Cellvibrio japonicus (strain Ueda107) (Pseudomonas fluorescens subsp. cellulosa) protein is Methylglyoxal synthase.